The primary structure comprises 211 residues: Homeobox protein Rhox5 (211 aa).

Residues 38 to 129 are disordered; the sequence is FFQAGEGRDE…PLRRPGSTQR (92 aa). Composition is skewed to gly residues over residues 52-62 and 70-84; these read GQPGEGAVGTE and GGEG…GPVG. The span at 102 to 119 shows a compositional bias: basic and acidic residues; sequence HEPVAEGTESVKSEDKQM. Positions 119 to 176 form a DNA-binding region, homeobox; atypical; it reads MPLRRPGSTQRRLAELERILLSSGSSSGGRSLIDGWISVCPECRNWFKIRRAAYRRNR.

Highly expressed in placenta. Lower levels in testis, epididymis, ovary and skeletal muscle.

The protein resides in the nucleus. Transcription factor required for differentiation of embryonic stem cells (ESCs) into primordial germ cells. In Rattus norvegicus (Rat), this protein is Homeobox protein Rhox5 (Rhox5).